The sequence spans 578 residues: V-type ATP synthase alpha chain (578 aa).

ATP is bound at residue 228 to 235 (GPFGSGKT).

This sequence belongs to the ATPase alpha/beta chains family.

The enzyme catalyses ATP + H2O + 4 H(+)(in) = ADP + phosphate + 5 H(+)(out). In terms of biological role, produces ATP from ADP in the presence of a proton gradient across the membrane. The V-type alpha chain is a catalytic subunit. This chain is V-type ATP synthase alpha chain, found in Thermus thermophilus (strain ATCC BAA-163 / DSM 7039 / HB27).